We begin with the raw amino-acid sequence, 145 residues long: Transcription antitermination protein NusB (145 aa).

The protein belongs to the NusB family.

In terms of biological role, involved in transcription antitermination. Required for transcription of ribosomal RNA (rRNA) genes. Binds specifically to the boxA antiterminator sequence of the ribosomal RNA (rrn) operons. The chain is Transcription antitermination protein NusB from Burkholderia cenocepacia (strain HI2424).